Consider the following 285-residue polypeptide: RNA 5'-monophosphate methyltransferase (285 aa).

Residues Arg-46, Asn-77, Asp-111, 136–137, and Met-165 each bind S-adenosyl-L-methionine; that span reads DI. Residues 53-275 form the Bin3-type SAM domain; sequence ELLRQLFPPE…KHTHETQAIP (223 aa).

It belongs to the methyltransferase superfamily. Interacts with DICER1; the interaction may be mediated by RNA.

It localises to the cytoplasm. It carries out the reaction a 5'-end 5'-phospho-ribonucleoside-RNA + S-adenosyl-L-methionine = a 5'-end (5'-methylphospho)-ribonucleoside-RNA + S-adenosyl-L-homocysteine. It catalyses the reaction a 5'-end 5'-phospho-ribonucleoside-RNA + 2 S-adenosyl-L-methionine = a 5'-end (5'-bismethylphospho)-ribonucleoside-RNA + 2 S-adenosyl-L-homocysteine. Its function is as follows. O-methyltransferase that specifically monomethylates 5'-monophosphate of cytoplasmic histidyl tRNA (tRNA(His)), acting as a capping enzyme by protecting tRNA(His) from cleavage by DICER1. Also able, with less efficiently, to methylate the 5' monophosphate of a subset of pre-miRNAs, acting as a negative regulator of miRNA processing. The 5' monophosphate of pre-miRNAs is recognized by DICER1 and is required for pre-miRNAs processing: methylation at this position reduces the processing of pre-miRNAs by DICER1. Was also reported to mediate dimethylation of pre-miR-145; however dimethylation cannot be reproduced by another group which observes a monomethylation of pre-miR-145. The polypeptide is RNA 5'-monophosphate methyltransferase (Mus musculus (Mouse)).